We begin with the raw amino-acid sequence, 702 residues long: Ribosomal RNA large subunit methyltransferase K/L (702 aa).

Residues 43-154 enclose the THUMP domain; sequence LIYQSLMWSR…KETASIALDL (112 aa).

The protein belongs to the methyltransferase superfamily. RlmKL family.

The protein localises to the cytoplasm. The enzyme catalyses guanosine(2445) in 23S rRNA + S-adenosyl-L-methionine = N(2)-methylguanosine(2445) in 23S rRNA + S-adenosyl-L-homocysteine + H(+). It catalyses the reaction guanosine(2069) in 23S rRNA + S-adenosyl-L-methionine = N(2)-methylguanosine(2069) in 23S rRNA + S-adenosyl-L-homocysteine + H(+). In terms of biological role, specifically methylates the guanine in position 2445 (m2G2445) and the guanine in position 2069 (m7G2069) of 23S rRNA. This Salmonella typhi protein is Ribosomal RNA large subunit methyltransferase K/L.